Here is a 335-residue protein sequence, read N- to C-terminus: Holliday junction branch migration complex subunit RuvB (335 aa).

The interval 1–183 (MDERIISSET…FGVIDHLEFY (183 aa)) is large ATPase domain (RuvB-L). ATP contacts are provided by residues Leu-22, Arg-23, Gly-64, Lys-67, Thr-68, Thr-69, 130–132 (EDY), Arg-173, Tyr-183, and Arg-220. Position 68 (Thr-68) interacts with Mg(2+). Residues 184-254 (TEEQLTEIVL…LAKEALTLLQ (71 aa)) form a small ATPAse domain (RuvB-S) region. A head domain (RuvB-H) region spans residues 257–335 (PRGLDTIDQK…HLGISYEKEV (79 aa)). Residues Arg-293, Arg-312, and Arg-317 each contribute to the DNA site.

This sequence belongs to the RuvB family. As to quaternary structure, homohexamer. Forms an RuvA(8)-RuvB(12)-Holliday junction (HJ) complex. HJ DNA is sandwiched between 2 RuvA tetramers; dsDNA enters through RuvA and exits via RuvB. An RuvB hexamer assembles on each DNA strand where it exits the tetramer. Each RuvB hexamer is contacted by two RuvA subunits (via domain III) on 2 adjacent RuvB subunits; this complex drives branch migration. In the full resolvosome a probable DNA-RuvA(4)-RuvB(12)-RuvC(2) complex forms which resolves the HJ.

It is found in the cytoplasm. It carries out the reaction ATP + H2O = ADP + phosphate + H(+). Its function is as follows. The RuvA-RuvB-RuvC complex processes Holliday junction (HJ) DNA during genetic recombination and DNA repair, while the RuvA-RuvB complex plays an important role in the rescue of blocked DNA replication forks via replication fork reversal (RFR). RuvA specifically binds to HJ cruciform DNA, conferring on it an open structure. The RuvB hexamer acts as an ATP-dependent pump, pulling dsDNA into and through the RuvAB complex. RuvB forms 2 homohexamers on either side of HJ DNA bound by 1 or 2 RuvA tetramers; 4 subunits per hexamer contact DNA at a time. Coordinated motions by a converter formed by DNA-disengaged RuvB subunits stimulates ATP hydrolysis and nucleotide exchange. Immobilization of the converter enables RuvB to convert the ATP-contained energy into a lever motion, pulling 2 nucleotides of DNA out of the RuvA tetramer per ATP hydrolyzed, thus driving DNA branch migration. The RuvB motors rotate together with the DNA substrate, which together with the progressing nucleotide cycle form the mechanistic basis for DNA recombination by continuous HJ branch migration. Branch migration allows RuvC to scan DNA until it finds its consensus sequence, where it cleaves and resolves cruciform DNA. The sequence is that of Holliday junction branch migration complex subunit RuvB from Listeria monocytogenes serotype 4b (strain CLIP80459).